The sequence spans 102 residues: uncharacterized protein (102 aa).

A helical membrane pass occupies residues 5–27; it reads IYRSNLVIVITLFVSLSYYHTCF.

The protein resides in the host membrane. This is an uncharacterized protein from Microplitis demolitor (Parasitoid wasp).